A 779-amino-acid polypeptide reads, in one-letter code: Endonuclease MutS2 (779 aa).

328 to 335 (GPNTGGKT) provides a ligand contact to ATP. One can recognise a Smr domain in the interval 704–779 (LDLRGKRYEE…GSGATIVTLG (76 aa)).

This sequence belongs to the DNA mismatch repair MutS family. MutS2 subfamily. As to quaternary structure, homodimer. Binds to stalled ribosomes, contacting rRNA.

In terms of biological role, endonuclease that is involved in the suppression of homologous recombination and thus may have a key role in the control of bacterial genetic diversity. Its function is as follows. Acts as a ribosome collision sensor, splitting the ribosome into its 2 subunits. Detects stalled/collided 70S ribosomes which it binds and splits by an ATP-hydrolysis driven conformational change. Acts upstream of the ribosome quality control system (RQC), a ribosome-associated complex that mediates the extraction of incompletely synthesized nascent chains from stalled ribosomes and their subsequent degradation. Probably generates substrates for RQC. This chain is Endonuclease MutS2, found in Streptococcus pyogenes serotype M49 (strain NZ131).